Here is a 305-residue protein sequence, read N- to C-terminus: Undecaprenyl-diphosphatase (305 aa).

The next 8 membrane-spanning stretches (helical) occupy residues 18–38 (GVTELFPVSSLGHAVLVPALV), 55–75 (YLAFIVGLHVATAAALLVFFW), 103–123 (WLIVVGTIPVGLAGLALEQLF), 130–150 (PVPAAAFLLLNGVALYAGEVL), 187–207 (GVLIGAAQILALLPGISRSGI), 225–245 (FSFLLATPIILAAGVYKIPEL), 246–266 (FGPLGAGIGGQVLAGSIASFV), and 284–304 (LTPFAIYCAVAGGASLVWLAL).

The protein belongs to the UppP family.

It localises to the cell membrane. The catalysed reaction is di-trans,octa-cis-undecaprenyl diphosphate + H2O = di-trans,octa-cis-undecaprenyl phosphate + phosphate + H(+). Catalyzes the dephosphorylation of undecaprenyl diphosphate (UPP). Confers resistance to bacitracin. The sequence is that of Undecaprenyl-diphosphatase from Mycolicibacterium paratuberculosis (strain ATCC BAA-968 / K-10) (Mycobacterium paratuberculosis).